The chain runs to 365 residues: Alternative oxidase 2, mitochondrial (365 aa).

Low complexity predominate over residues 32–46 (TPPHSTTTTSPSSPA). Residues 32-52 (TPPHSTTTTSPSSPAFHQPNH) form a disordered region. Residues glutamate 166, glutamate 205, and histidine 208 each contribute to the Fe cation site. The helical transmembrane segment at 220 to 242 (WFTRSIIYVGQGVFTNVFFLLYL) threads the bilayer. Residues glutamate 256, glutamate 257, glutamate 312, and histidine 315 each coordinate Fe cation. The interval 345 to 365 (QPNHGINVMRPTGWEKQDLQL) is disordered.

The protein belongs to the alternative oxidase family. Fe cation serves as cofactor.

It localises to the mitochondrion inner membrane. Catalyzes cyanide-resistant oxygen consumption. May increase respiration when the cytochrome respiratory pathway is restricted, or in response to low temperatures. In Candida albicans (Yeast), this protein is Alternative oxidase 2, mitochondrial (AOX2).